We begin with the raw amino-acid sequence, 2279 residues long: Zinc finger protein 318 (2279 aa).

Composition is skewed to low complexity over residues 1–12 and 25–39; these read MYRSSARSSVSS and SGRS…ARRS. Disordered regions lie at residues 1–140 and 164–189; these read MYRS…PGLC and RRRL…LTDD. The segment at 1–1092 is interaction with AR; it reads MYRSSARSSV…THMHNKKHTQ (1092 aa). Ser40 carries the post-translational modification Phosphoserine. Over residues 53–67 the composition is skewed to basic residues; it reads PARRPRSPSGHRGRR. Phosphoserine occurs at positions 79 and 81. Over residues 110–132 the composition is skewed to basic and acidic residues; sequence SRGESRADYARDGRGDHPGDSGS. 2 positions are modified to phosphoserine: Ser136 and Ser173. Residues 177–188 show a composition bias toward acidic residues; sequence NLEDMDRDDLTD. Phosphotyrosine is present on Tyr205. 2 positions are modified to phosphoserine: Ser207 and Ser214. 2 disordered regions span residues 279 to 346 and 397 to 416; these read TVKI…DGGG and LESF…YSGH. Residues 311-333 are compositionally biased toward basic and acidic residues; it reads LDPEFRELDLARRKREEEEERSR. Residues 315 to 343 are a coiled coil; the sequence is FRELDLARRKREEEEERSRSLSQELVGVD. Phosphoserine is present on residues Ser464, Ser472, Ser501, and Ser527. Disordered regions lie at residues 514-533 and 540-570; these read LADS…DIED and GDEE…ASSL. Residues Lys547, Lys553, Lys566, and Lys578 each participate in a glycyl lysine isopeptide (Lys-Gly) (interchain with G-Cter in SUMO2) cross-link. Basic and acidic residues predominate over residues 664-683; it reads FSADRRSSDPHRLESREAHH. The disordered stretch occupies residues 664–709; that stretch reads FSADRRSSDPHRLESREAHHSNTHSPEVSHPHPPSPVDPYLLTKNS. Position 842 is a phosphothreonine (Thr842). Residues 876-980 are a coiled coil; that stretch reads EKISDEKNRA…SELDKVAQIL (105 aa). 2 stretches are compositionally biased toward basic and acidic residues: residues 922-941 and 989-1012; these read QQGE…KDPL and QKSL…KSPE. Disordered stretches follow at residues 922 to 942 and 989 to 1051; these read QQGE…DPLL and QKSL…TKQL. Ser1010 carries the phosphoserine modification. The span at 1013–1023 shows a compositional bias: low complexity; it reads KVSSFSNSSSN. The segment covering 1024 to 1034 has biased composition (basic and acidic residues); it reads KESKVNNEKFR. Ser1037 bears the Phosphoserine mark. 2 Matrin-type zinc fingers span residues 1063-1097 and 1136-1166; these read AGNH…LDPY and FYCQ…KYKK. Composition is skewed to basic and acidic residues over residues 1195–1235, 1242–1251, 1258–1267, 1279–1288, and 1296–1316; these read RRQS…KLED, NSPEKAENKR, QLKEEVKKES, KKPEKEEEKS, and SKEE…EAGK. The segment at 1195–1319 is disordered; that stretch reads RRQSELKRKL…GKTEAGKAKP (125 aa). A phosphoserine mark is found at Ser1243 and Ser1267. Ser1420 is modified (phosphoserine). 4 disordered regions span residues 1428 to 1463, 1577 to 1628, 1702 to 1735, and 1753 to 1775; these read AEKS…HPAA, GKGA…EELH, SSFQ…PPQL, and ESVN…ESEI. A compositionally biased stretch (pro residues) spans 1440–1462; sequence ILPPPPPPPPPPPPPPPVIPHPA. A compositionally biased stretch (low complexity) spans 1602-1623; it reads SNLSRTKSSDTSSTSPLNSSAS. The span at 1708–1719 shows a compositional bias: basic and acidic residues; it reads TSRDISPEKSEL. Ser1713 is subject to Phosphoserine. Over residues 1724–1734 the composition is skewed to pro residues; sequence PGPPGVEPPPQ. Residues 1768–1792 adopt a coiled-coil conformation; sequence EDCRESEIETNTELKERVKELSEGI. A phosphoserine mark is found at Ser1856, Ser1896, Ser1971, Ser2030, Ser2035, Ser2091, Ser2101, Ser2189, Ser2192, and Ser2243. The segment at 2252–2279 is disordered; the sequence is DNMVPQGMPEQETTVGAIQDHTESSVHN.

As to quaternary structure, homodimer. Heterodimer of isoform 1 and isoform 2. Isoform 1 and isoform 2 interact with AR. Expressed in endocrine tissue.

The protein resides in the nucleus. Acts as a transcriptional corepressor for AR-mediated transactivation function. May act as a transcriptional regulator during spermatogenesis and, in particular, during meiotic division. In terms of biological role, acts as a transcriptional coactivator for AR-mediated transactivation function. May act as a transcriptional regulator during spermatogenesis and, in particular, during meiotic division. This is Zinc finger protein 318 (ZNF318) from Homo sapiens (Human).